A 114-amino-acid polypeptide reads, in one-letter code: UPF0102 protein HP_0823 (114 aa).

This sequence belongs to the UPF0102 family.

The chain is UPF0102 protein HP_0823 from Helicobacter pylori (strain ATCC 700392 / 26695) (Campylobacter pylori).